Reading from the N-terminus, the 421-residue chain is Glutamyl-tRNA reductase (421 aa).

Residues Thr-49–Arg-52, Ser-109, Glu-114–Gln-116, and Gln-120 each bind substrate. Cys-50 functions as the Nucleophile in the catalytic mechanism. Gly-189 to Gly-194 contacts NADP(+).

The protein belongs to the glutamyl-tRNA reductase family. In terms of assembly, homodimer.

It carries out the reaction (S)-4-amino-5-oxopentanoate + tRNA(Glu) + NADP(+) = L-glutamyl-tRNA(Glu) + NADPH + H(+). The protein operates within porphyrin-containing compound metabolism; protoporphyrin-IX biosynthesis; 5-aminolevulinate from L-glutamyl-tRNA(Glu): step 1/2. In terms of biological role, catalyzes the NADPH-dependent reduction of glutamyl-tRNA(Glu) to glutamate 1-semialdehyde (GSA). The polypeptide is Glutamyl-tRNA reductase (Limosilactobacillus reuteri (strain DSM 20016) (Lactobacillus reuteri)).